A 311-amino-acid polypeptide reads, in one-letter code: Pyrimidine-specific ribonucleoside hydrolase RihA (311 aa).

H240 is a catalytic residue.

It belongs to the IUNH family. RihA subfamily.

In terms of biological role, hydrolyzes with equal efficiency cytidine or uridine to ribose and cytosine or uracil, respectively. This chain is Pyrimidine-specific ribonucleoside hydrolase RihA, found in Escherichia coli O17:K52:H18 (strain UMN026 / ExPEC).